A 284-amino-acid chain; its full sequence is Pseudomurein endoisopeptidase PeiW (284 aa).

Pseudomurein-binding repeat stretches follow at residues 4 to 31, 34 to 65, 70 to 100, and 106 to 137; these read GLNEFLDMKKRYEDFKMKNKREPRYVTT, GYKVMLPVFKDMLRRYEDFVRINGREPNYISI, NGKIEIKKFRDMLRRYEDFVRINGREPNIIY, and SDHVSLGTFKDMLRRYKDFVRINGREPNYISI. Residues cysteine 198, histidine 233, and aspartate 250 contribute to the active site.

This sequence belongs to the Psimunavirus Pseudomurein endoisopeptidase family. In terms of assembly, monomer. It depends on Ca(2+) as a cofactor. Mg(2+) serves as cofactor.

In terms of biological role, cysteine protease that cleaves the cell wall of its host methanogen under hydrogen limitation of the latter (autolysis). Cleaves the epsilon-Ala-Lys isopeptide bond in the oligopeptides of pseudomurein. The chain is Pseudomurein endoisopeptidase PeiW (peiW) from Methanothermobacter phage psiM100.